Here is a 201-residue protein sequence, read N- to C-terminus: Putative amino-acid transporter Mb0498 (201 aa).

Helical transmembrane passes span 25–45 (VLVI…AGVG), 57–77 (MTLV…LLAA), 104–124 (LVVT…IGAL), 133–153 (WFFG…LGFS), and 169–189 (ILDA…LVTS).

It belongs to the LysE/ArgO transporter (TC 2.A.75) family.

The protein localises to the cell membrane. This is Putative amino-acid transporter Mb0498 from Mycobacterium bovis (strain ATCC BAA-935 / AF2122/97).